The primary structure comprises 336 residues: Cell division protein ZipA (336 aa).

The Periplasmic segment spans residues 1 to 6 (MMQDLR). A helical transmembrane segment spans residues 7-27 (LILIVVGAIAIIALLLHGLWT). At 28-336 (SRKERSSLFR…RIRDVLKANA (309 aa)) the chain is on the cytoplasmic side. A compositionally biased stretch (basic and acidic residues) spans 40 to 51 (PVKRAKKARDET). Residues 40–190 (PVKRAKKARD…APAQPQQPAE (151 aa)) form a disordered region. Positions 76-89 (SFSSSSFDNASFDN) are enriched in low complexity. A compositionally biased stretch (polar residues) spans 126–138 (PRSQVRGDSNPQV). Residues 179–190 (QPAPAQPQQPAE) show a composition bias toward low complexity.

Belongs to the ZipA family. Interacts with FtsZ via their C-terminal domains.

The protein localises to the cell inner membrane. Its function is as follows. Essential cell division protein that stabilizes the FtsZ protofilaments by cross-linking them and that serves as a cytoplasmic membrane anchor for the Z ring. Also required for the recruitment to the septal ring of downstream cell division proteins. The polypeptide is Cell division protein ZipA (Pectobacterium carotovorum subsp. carotovorum (strain PC1)).